The primary structure comprises 122 residues: Succinate dehydrogenase assembly factor 3, mitochondrial (122 aa).

The transit peptide at Met1–Gly47 directs the protein to the mitochondrion.

It belongs to the complex I LYR family. SDHAF3 subfamily. Interacts with the iron-sulfur protein subunit within the SDH catalytic dimer.

Its subcellular location is the mitochondrion matrix. Functionally, plays an essential role in the assembly of succinate dehydrogenase (SDH), an enzyme complex (also referred to as respiratory complex II) that is a component of both the tricarboxylic acid (TCA) cycle and the mitochondrial electron transport chain, and which couples the oxidation of succinate to fumarate with the reduction of ubiquinone (coenzyme Q) to ubiquinol. Promotes maturation of the iron-sulfur protein subunit of the SDH catalytic dimer, protecting it from the deleterious effects of oxidants. May act together with SDHAF1. The polypeptide is Succinate dehydrogenase assembly factor 3, mitochondrial (Candida albicans (strain SC5314 / ATCC MYA-2876) (Yeast)).